A 62-amino-acid chain; its full sequence is Beta-defensin 33 (62 aa).

Residues 1–20 (MRLLFLLFLLLVCLAQKTSG) form the signal peptide. 3 disulfides stabilise this stretch: Cys-30/Cys-59, Cys-37/Cys-52, and Cys-45/Cys-60.

The protein belongs to the beta-defensin family.

The protein localises to the secreted. Has antibacterial activity. The sequence is that of Beta-defensin 33 (Defb33) from Rattus norvegicus (Rat).